Consider the following 346-residue polypeptide: MESLMASSTLPPLFADEDGSKESNDLATSGLTHPEGPYGSAATSTTNPEFVEDLSQGQLLQSEASNAVEGNEQRPEDEQRSKRGGWSKGRKRKKPLRDSNAPKSPLTGYVRFMNERREQLRAKRPEVPFPEITRMLGNEWSKLPPEEKQRYLDEADRDKERYMKELEQYQKTEAYKVFSRKTQDRQKGKSHRQDAARQATHDHEKETEVKERSVFDIPIFTEEFLNHSKAREAELRQLRKSNMEFEERNAALQKHVESMRTAVEKLEVDVIQERSRNTVLQQHLETLRQMLTSSFASMPLPGSGEIPTVDTIDSYMNRLHSIILANPQDNENFIATVREVVNRLDR.

2 stretches are compositionally biased toward polar residues: residues 1-10 (MESLMASSTL) and 55-65 (SQGQLLQSEAS). 2 disordered regions span residues 1–112 (MESL…YVRF) and 178–210 (FSRK…TEVK). Residues 71-81 (NEQRPEDEQRS) show a composition bias toward basic and acidic residues. Over residues 82–95 (KRGGWSKGRKRKKP) the composition is skewed to basic residues. Residues 102 to 170 (PKSPLTGYVR…RYMKELEQYQ (69 aa)) constitute a DNA-binding region (HMG box). The residue at position 104 (S104) is a Phosphoserine. The span at 181–210 (KTQDRQKGKSHRQDAARQATHDHEKETEVK) shows a compositional bias: basic and acidic residues. A coiled-coil region spans residues 228 to 272 (SKAREAELRQLRKSNMEFEERNAALQKHVESMRTAVEKLEVDVIQ).

Interacts with DTNB. In terms of tissue distribution, expressed in brain. Detected in mature neurons.

It is found in the nucleus. Functionally, plays a role in neuronal differentiation as chromatin-associated protein. Acts as inhibitor of HMG20B. Overcomes the repressive effects of the neuronal silencer REST and induces the activation of neuronal-specific genes. Involved in the recruitment of the histone methyltransferase KMT2A/MLL1 and consequent increased methylation of histone H3 lysine 4. The protein is High mobility group protein 20A (Hmg20a) of Mus musculus (Mouse).